Here is a 153-residue protein sequence, read N- to C-terminus: Small ribosomal subunit protein uS15 (153 aa).

Belongs to the universal ribosomal protein uS15 family. As to quaternary structure, part of the 30S ribosomal subunit.

The sequence is that of Small ribosomal subunit protein uS15 from Sulfolobus acidocaldarius (strain ATCC 33909 / DSM 639 / JCM 8929 / NBRC 15157 / NCIMB 11770).